The primary structure comprises 135 residues: MNYFLKAPILGFEHISGVRLEKIDSLFSRLMGQTNSPMALDMVLVNPYCLREYSFVIPKYIELLLELDSHSKVEVYCVVVLQKNLEDSMVNFLAPLVFNSKNGFGAQVALSMMDYPDFGFRDPLKSFVIKERERA.

The protein belongs to the FliW family. Interacts with translational regulator CsrA and flagellin(s).

The protein localises to the cytoplasm. Acts as an anti-CsrA protein, binds CsrA and prevents it from repressing translation of its target genes, one of which is flagellin. Binds to flagellin and participates in the assembly of the flagellum. The protein is Flagellar assembly factor FliW 2 of Helicobacter acinonychis (strain Sheeba).